The chain runs to 370 residues: MKFYRCSSPAPRFQAVTPGEKIRETSVLTSLVQPGAREKARQMVSGSSNDRFVVSRRRTGFGDCLWSLAAAWRFAKQTGRTLAIDWRGSCYLDEPFTNAFPVFFEPVEDIGGVRVICDDDINTRSFPGPFFPTWWNKPSFDCIYRPDEQIFRERDQLDQLFQSQRDSDANTVVCDACLMWRCDQEAEREIFRSIKPRPEIQARIDAIYREHFEPYSVIGIHVRHGNGEDIMGHAPYWADTERALRQIYNAIDEARSLSHAKPVRAFLCTDSALVLEQVSVKFPDVFAIPKQFQAPQAGPLHHPALGAEGGFSALTEMYLLARCDTVIRFPPTSAFTRYARLFAPRVIEFDLNDPGRLILIEDNSQALMAS.

In terms of domain architecture, GT23 spans 47–361 (SSNDRFVVSR…NDPGRLILIE (315 aa)).

This sequence belongs to the glycosyltransferase 23 family.

Functionally, fucosyltransferase which adds the fucose moiety of the nod factor on its terminal reducing N-acetylglucosamine end. Uses GDP-fucose as the donor group. This chain is Nodulation protein Z (nodZ), found in Bradyrhizobium diazoefficiens (strain JCM 10833 / BCRC 13528 / IAM 13628 / NBRC 14792 / USDA 110).